Consider the following 499-residue polypeptide: Sensor histidine kinase VxrA (499 aa).

Over 1-12 (MRYSFCMLEKTN) the chain is Cytoplasmic. A helical membrane pass occupies residues 13-31 (IPLIRALNLTLVSLCFAML). The Periplasmic portion of the chain corresponds to 32–257 (PNPVHADSLP…ICWDVEDHSD (226 aa)). Cystine bridges form between C101–C122 and C241–C249. Residues 258 to 280 (LLRTSMIILVIANIFLVLGWSGY) traverse the membrane as a helical segment. At 281–499 (RWNSKRQEMR…IPCETDTASR (219 aa)) the chain is on the cytoplasmic side. The 197-residue stretch at 298-494 (ILTHELRTPI…TFILEIPCET (197 aa)) folds into the Histidine kinase domain. The residue at position 301 (H301) is a Phosphohistidine; by autocatalysis.

Homodimer. Autophosphorylated. Contains two disulfide bonds that may play a role in the stability of the protein. However, the disulfide bonds are not absolutely essential, as some activity and growth are detected in the absence of each disulfide bond.

Its subcellular location is the cell inner membrane. The catalysed reaction is ATP + protein L-histidine = ADP + protein N-phospho-L-histidine.. Member of the two-component regulatory system VxrB/VxrA involved in the regulation of diverses processes, including virulence, the type VI secretion system (T6SS) and biofilm formation. Functions as a sensor protein kinase which is autophosphorylated at a histidine residue and transfers its phosphate group to the conserved aspartic acid residue in the regulatory domain of VxrB. Is critical for colonization in the infant mouse model. Contributes to the resistance to beta-lactam treatment. The sequence is that of Sensor histidine kinase VxrA from Vibrio cholerae serotype O1 (strain ATCC 39315 / El Tor Inaba N16961).